Consider the following 133-residue polypeptide: Phosphoribosyl-AMP cyclohydrolase (133 aa).

Residue Asp77 coordinates Mg(2+). Cys78 provides a ligand contact to Zn(2+). Mg(2+) is bound by residues Asp79 and Asp81. Positions 95 and 102 each coordinate Zn(2+).

Belongs to the PRA-CH family. As to quaternary structure, homodimer. Mg(2+) serves as cofactor. It depends on Zn(2+) as a cofactor.

It is found in the cytoplasm. The enzyme catalyses 1-(5-phospho-beta-D-ribosyl)-5'-AMP + H2O = 1-(5-phospho-beta-D-ribosyl)-5-[(5-phospho-beta-D-ribosylamino)methylideneamino]imidazole-4-carboxamide. The protein operates within amino-acid biosynthesis; L-histidine biosynthesis; L-histidine from 5-phospho-alpha-D-ribose 1-diphosphate: step 3/9. In terms of biological role, catalyzes the hydrolysis of the adenine ring of phosphoribosyl-AMP. This is Phosphoribosyl-AMP cyclohydrolase from Pseudomonas fluorescens (strain Pf0-1).